Consider the following 77-residue polypeptide: U8-lycotoxin-Ls1b (77 aa).

The first 20 residues, 1-20 (MKLIIFTGLVLFAIVSLIEA), serve as a signal peptide directing secretion. Positions 21–26 (QAENEK) are excised as a propeptide.

Belongs to the neurotoxin 19 (CSTX) family. 08 (U8-Lctx) subfamily. In terms of processing, contains 4 disulfide bonds. As to expression, expressed by the venom gland.

It localises to the secreted. This is U8-lycotoxin-Ls1b from Lycosa singoriensis (Wolf spider).